The primary structure comprises 131 residues: D-ribose pyranase (131 aa).

The active-site Proton donor is the His20. Substrate is bound by residues Asp28, His98, and Tyr120 to Asn122.

The protein belongs to the RbsD / FucU family. RbsD subfamily. As to quaternary structure, homodecamer.

It is found in the cytoplasm. It carries out the reaction beta-D-ribopyranose = beta-D-ribofuranose. It participates in carbohydrate metabolism; D-ribose degradation; D-ribose 5-phosphate from beta-D-ribopyranose: step 1/2. Functionally, catalyzes the interconversion of beta-pyran and beta-furan forms of D-ribose. The polypeptide is D-ribose pyranase (Bacillus mycoides (strain KBAB4) (Bacillus weihenstephanensis)).